The chain runs to 1466 residues: DNA-directed RNA polymerase subunit beta'' (1466 aa).

Zn(2+) is bound by residues Cys-220, Cys-296, Cys-303, and Cys-306. The segment at 618–725 (TREEDLEDEY…EDEYDSSEED (108 aa)) is disordered. Acidic residues-rich tracts occupy residues 621-631 (EDLEDEYETLE), 639-651 (DEYE…DEYG), and 707-725 (LEED…SEED).

This sequence belongs to the RNA polymerase beta' chain family. RpoC2 subfamily. As to quaternary structure, in plastids the minimal PEP RNA polymerase catalytic core is composed of four subunits: alpha, beta, beta', and beta''. When a (nuclear-encoded) sigma factor is associated with the core the holoenzyme is formed, which can initiate transcription. Zn(2+) is required as a cofactor.

The protein localises to the plastid. It localises to the chloroplast. The enzyme catalyses RNA(n) + a ribonucleoside 5'-triphosphate = RNA(n+1) + diphosphate. DNA-dependent RNA polymerase catalyzes the transcription of DNA into RNA using the four ribonucleoside triphosphates as substrates. The protein is DNA-directed RNA polymerase subunit beta'' of Agrostis stolonifera (Creeping bentgrass).